Here is a 139-residue protein sequence, read N- to C-terminus: ATP synthase epsilon chain (139 aa).

The protein belongs to the ATPase epsilon chain family. As to quaternary structure, F-type ATPases have 2 components, CF(1) - the catalytic core - and CF(0) - the membrane proton channel. CF(1) has five subunits: alpha(3), beta(3), gamma(1), delta(1), epsilon(1). CF(0) has three main subunits: a, b and c.

The protein localises to the cell inner membrane. Produces ATP from ADP in the presence of a proton gradient across the membrane. The sequence is that of ATP synthase epsilon chain (atpC) from Escherichia coli O157:H7.